Reading from the N-terminus, the 119-residue chain is Single-stranded DNA-binding protein (119 aa).

An SSB domain is found at 3–102; the sequence is INIVTLVGRV…IRVDQLELLG (100 aa).

In terms of assembly, homotetramer.

The protein is Single-stranded DNA-binding protein (ssb1) of Anabaena variabilis.